Consider the following 87-residue polypeptide: Small ribosomal subunit protein uS17 (87 aa).

Belongs to the universal ribosomal protein uS17 family. As to quaternary structure, part of the 30S ribosomal subunit.

Its function is as follows. One of the primary rRNA binding proteins, it binds specifically to the 5'-end of 16S ribosomal RNA. This is Small ribosomal subunit protein uS17 from Exiguobacterium sibiricum (strain DSM 17290 / CCUG 55495 / CIP 109462 / JCM 13490 / 255-15).